We begin with the raw amino-acid sequence, 1009 residues long: DENN domain-containing protein 1A (1009 aa).

The uDENN domain occupies 13 to 145; sequence FEVYVEVAYP…HKLPIPDPGV (133 aa). One can recognise a cDENN domain in the interval 162-298; it reads ELPSIPENRN…VISSLKNRLK (137 aa). Positions 300-378 constitute a dDENN domain; the sequence is VSTTTGDGVA…DGRLDLLNSG (79 aa). The FXDXF motif signature appears at 381 to 385; it reads FSDVF. A disordered region spans residues 453 to 564; that stretch reads DIAENGCAPT…TGPVPAPPDR (112 aa). Position 473 is a phosphoserine (Ser-473). Residues 477–489 show a composition bias toward basic and acidic residues; the sequence is EAKDPKLREDRRP. Positions 500–509 are enriched in basic residues; the sequence is PRPHVVKRPK. Thr-519 is subject to Phosphothreonine. Phosphoserine is present on residues Ser-520, Ser-523, Ser-536, Ser-538, and Ser-546. A Clathrin box motif is present at residues 569 to 578; sequence DLLEDVFSNL. The residue at position 592 (Ser-592) is a Phosphoserine. Residues 648-714 are disordered; that stretch reads IPSKPPAASP…RKTPELGIVP (67 aa). Phosphoserine is present on Ser-749. Disordered regions lie at residues 796-831 and 928-1009; these read STLP…QPPL and RSSA…ETFE. 2 stretches are compositionally biased toward pro residues: residues 820–831 and 945–957; these read AGTPTPFPQPPL and GDPP…PPQG. A compositionally biased stretch (basic and acidic residues) spans 972–983; it reads DPFEDLLQKTKQ. The span at 986–997 shows a compositional bias: low complexity; that stretch reads SPSPALAPAPDS. Residues 999–1009 show a composition bias toward basic and acidic residues; the sequence is EQLRKQWETFE.

Interacts with RAB35. Interacts with clathrin and with the adapter protein complex 2, AP-2. Interacts with ITSN1 and SH3GL2. Interacts (when phosphorylated) with YWHAE. Post-translationally, phosphorylated on serine and/or threonine in an Akt-dependent manner. Phosphorylation probably regulates the guanine nucleotide exchange factor (GEF) activity, possibly by disrupting an intramolecular interaction between the DENN domain and the C-terminus of the protein, thereby relieving the autoinhibition.

Its subcellular location is the cytoplasmic vesicle. The protein resides in the clathrin-coated vesicle membrane. It is found in the presynaptic cell membrane. The guanine nucleotide exchange factor (GEF) activity is autoinhibited. Autoinhibition may be the result of intramolecular interaction between the DENN domain and the C-terminus, which is disrupted upon phosphorylation. Activation is regulated by Akt activation. Functionally, guanine nucleotide exchange factor (GEF) regulating clathrin-mediated endocytosis through RAB35 activation. Promotes the exchange of GDP to GTP, converting inactive GDP-bound RAB35 into its active GTP-bound form. Regulates clathrin-mediated endocytosis of synaptic vesicles and mediates exit from early endosomes. Binds phosphatidylinositol-phosphates (PtdInsPs), with some preference for PtdIns(3)P. This is DENN domain-containing protein 1A from Homo sapiens (Human).